The sequence spans 156 residues: Small ribosomal subunit protein eS10 (156 aa).

Positions 91–156 (LKRQTRPEAA…FGRGRQEQEE (66 aa)) are disordered. Residues 95–119 (TRPEAARPRPKEGAPRAQVGEDRAG) show a composition bias toward basic and acidic residues.

The protein belongs to the eukaryotic ribosomal protein eS10 family.

It is found in the cytoplasm. In Lumbricus rubellus (Humus earthworm), this protein is Small ribosomal subunit protein eS10 (RPS10).